A 145-amino-acid polypeptide reads, in one-letter code: Probable flagellum biosynthesis repressor protein FlbT (145 aa).

Belongs to the FlbT family.

Has a post-transcriptional repressor function in flagellum biogenesis. Associates with the 5'-UTR of fljK mRNA and promotes its degradation. This chain is Probable flagellum biosynthesis repressor protein FlbT, found in Chelativorans sp. (strain BNC1).